A 414-amino-acid chain; its full sequence is Esterase FrsA (414 aa).

The protein belongs to the FrsA family.

The catalysed reaction is a carboxylic ester + H2O = an alcohol + a carboxylate + H(+). Its function is as follows. Catalyzes the hydrolysis of esters. The polypeptide is Esterase FrsA (Klebsiella pneumoniae (strain 342)).